Reading from the N-terminus, the 376-residue chain is MASSTKKDYYEILGVPRNASQEEIKKAYRRLVRKYHPDICKKPECEEKFKEINEAYQVLSDPEKRKLYDMYGHAAFEGAGAQQRVETTEIPPIEEILREFFDFDIGSIFERATGRRRARRRRSVKGEDIVVPVEITLEEAFKGTTVPIEVEREVPCSACGGTGYDESKSRTCPTCGGRGETVQGNWFFQVRQTCPTCGGEGVIYENCHACTGRGYGLVKETIKVKIPPGVRDGSKLVVEGKGHAGRYGGPPGDLYIIVKVKPHKIFERKGDDLYVDVNITYPEAVLGTEVEVPTLDGEKVKVKIPPGTKEGELIKVPGKGMPRLKGSGRGDLYVRVHIDVPKIGVLSKLLGDGKKVEELLKQLQEVLPKPERIVER.

The J domain maps to 8 to 72 (DYYEILGVPR…EKRKLYDMYG (65 aa)). The CR-type zinc finger occupies 143 to 219 (GTTVPIEVER…CTGRGYGLVK (77 aa)). Residues Cys-156, Cys-159, Cys-172, Cys-175, Cys-194, Cys-197, Cys-207, and Cys-210 each coordinate Zn(2+). CXXCXGXG motif repeat units lie at residues 156–163 (CSACGGTG), 172–179 (CPTCGGRG), 194–201 (CPTCGGEG), and 207–214 (CHACTGRG).

The protein belongs to the DnaJ family. As to quaternary structure, homodimer. The cofactor is Zn(2+).

It is found in the cytoplasm. Participates actively in the response to hyperosmotic and heat shock by preventing the aggregation of stress-denatured proteins and by disaggregating proteins, also in an autonomous, DnaK-independent fashion. Unfolded proteins bind initially to DnaJ; upon interaction with the DnaJ-bound protein, DnaK hydrolyzes its bound ATP, resulting in the formation of a stable complex. GrpE releases ADP from DnaK; ATP binding to DnaK triggers the release of the substrate protein, thus completing the reaction cycle. Several rounds of ATP-dependent interactions between DnaJ, DnaK and GrpE are required for fully efficient folding. Also involved, together with DnaK and GrpE, in the DNA replication of plasmids through activation of initiation proteins. The chain is Chaperone protein DnaJ 2 from Aquifex aeolicus (strain VF5).